A 427-amino-acid polypeptide reads, in one-letter code: Gamma-glutamyl phosphate reductase (427 aa).

The protein belongs to the gamma-glutamyl phosphate reductase family.

It localises to the cytoplasm. The enzyme catalyses L-glutamate 5-semialdehyde + phosphate + NADP(+) = L-glutamyl 5-phosphate + NADPH + H(+). It functions in the pathway amino-acid biosynthesis; L-proline biosynthesis; L-glutamate 5-semialdehyde from L-glutamate: step 2/2. Functionally, catalyzes the NADPH-dependent reduction of L-glutamate 5-phosphate into L-glutamate 5-semialdehyde and phosphate. The product spontaneously undergoes cyclization to form 1-pyrroline-5-carboxylate. In Brucella melitensis biotype 2 (strain ATCC 23457), this protein is Gamma-glutamyl phosphate reductase.